Here is a 560-residue protein sequence, read N- to C-terminus: Protein SINE1 (560 aa).

An N-acetylglycine modification is found at glycine 2. Positions 7 to 287 (PILRQELANL…VRGAAYEAMM (281 aa)) are ARMADILLO-type fold. Residues 517-560 (KKKKKKMSYAKLVIAISFVVVALFATVILMVNQDDDVGYYTVPT) enclose the KASH domain. The helical transmembrane segment at 528 to 548 (LVIAISFVVVALFATVILMVN) threads the bilayer. The Required for nuclear localization signature appears at 557-560 (TVPT).

In terms of assembly, interacts with SUN1 and SUN2. Binds to F-actin. As to expression, preferentially expressed in guards cells, but also detected in root cells.

It localises to the nucleus membrane. In terms of biological role, plays a role in nucleus positioning in guard cells. This is Protein SINE1 from Arabidopsis thaliana (Mouse-ear cress).